Consider the following 421-residue polypeptide: Zinc finger protein 57 (421 aa).

In terms of domain architecture, KRAB spans 15 to 88 (VSYEDVAVSF…SCTGVFKGGP (74 aa)). The C2H2-type 1; degenerate zinc finger occupies 90–113 (FFCLTCGKCFKKNTFLFNHQFPVR). C2H2-type zinc fingers lie at residues 140 to 162 (FFCNFCGKTYRDASGLSRHRRAH) and 168 to 190 (RSCPECGKCFRDQSEVNRHLKVH). Residues 191–221 (QNKPAASNQAGNQASNQRLKSRVPPTTPRSQ) form a disordered region. Residues 195–207 (AASNQAGNQASNQ) show a composition bias toward low complexity. A C2H2-type 4 zinc finger spans residues 264–286 (ISCPYCHITFTMRTCLLTHLKIH). Residues 313–332 (YTCPVCDSSFRGKESLLDHL) form a C2H2-type 5; degenerate zinc finger. The disordered stretch occupies residues 371 to 421 (GKRMESRRRRRKRACTENPETEGLSGKGRVAPWEMEGATSPESPVTEEDSD).

Belongs to the krueppel C2H2-type zinc-finger protein family. As to expression, expressed in oocytes and in a subset of adult tissues. Expressed at high levels in testis, and at low levels in cerebellum. Present in sciatic nerve and spinal cord (at protein level).

It is found in the nucleus. Functionally, transcription regulator required to maintain maternal and paternal gene imprinting, a process by which gene expression is restricted in a parent of origin-specific manner by epigenetic modification of genomic DNA and chromatin, including DNA methylation. Acts by controlling DNA methylation during the earliest multicellular stages of development at multiple imprinting control regions (ICRs). Acts together with ZNF445, but ZFP57 plays the predominant role in imprinting maintenance. In contrast, in humans, ZNF445 seems to be the major factor early embryonic imprinting maintenance. Required for the establishment of maternal methylation imprints at SNRPN locus. Acts as a transcriptional repressor in Schwann cells. Binds to a 5'-TGCCGC-3' consensus sequence and recognizes the methylated CpG within this element. The protein is Zinc finger protein 57 (Zfp57) of Mus musculus (Mouse).